The primary structure comprises 95 residues: MAIFKSISSISNSTGSMGSSIGASNLNGFASNDNSISCFDGGCGGSGGSGGSGGLAGWSGLSGWGGIGGFNGSCGGSNANIINIDIDIGRRRRCC.

It belongs to the UPF0512 family.

This Dictyostelium discoideum (Social amoeba) protein is UPF0512 protein H.